The primary structure comprises 444 residues: Elongation factor 1-alpha (444 aa).

One can recognise a tr-type G domain in the interval 15–236 (KPHINLAVVG…VLDTFQPPPR (222 aa)). The tract at residues 24-31 (GHVDNGKS) is G1. 24-31 (GHVDNGKS) is a binding site for GTP. A Mg(2+)-binding site is contributed by serine 31. The interval 80-84 (GVTIE) is G2. A G3 region spans residues 101–104 (DLPG). Residues 101–105 (DLPGH) and 163–166 (NKMD) contribute to the GTP site. The interval 163-166 (NKMD) is G4. Residues 202-204 (SAV) are G5.

Belongs to the TRAFAC class translation factor GTPase superfamily. Classic translation factor GTPase family. EF-Tu/EF-1A subfamily.

It is found in the cytoplasm. The enzyme catalyses GTP + H2O = GDP + phosphate + H(+). GTP hydrolase that promotes the GTP-dependent binding of aminoacyl-tRNA to the A-site of ribosomes during protein biosynthesis. This is Elongation factor 1-alpha from Pyrobaculum arsenaticum (strain DSM 13514 / JCM 11321 / PZ6).